The chain runs to 143 residues: Anti-sigma F factor (143 aa).

Belongs to the anti-sigma-factor family.

It carries out the reaction L-seryl-[protein] + ATP = O-phospho-L-seryl-[protein] + ADP + H(+). It catalyses the reaction L-threonyl-[protein] + ATP = O-phospho-L-threonyl-[protein] + ADP + H(+). Its function is as follows. Binds to sigma F and blocks its ability to form an RNA polymerase holoenzyme (E-sigma F). Phosphorylates SpoIIAA on a serine residue. This phosphorylation may enable SpoIIAA to act as an anti-anti-sigma factor that counteracts SpoIIAB and thus releases sigma F from inhibition. The polypeptide is Anti-sigma F factor (Clostridium botulinum (strain Eklund 17B / Type B)).